A 103-amino-acid chain; its full sequence is Large ribosomal subunit protein uL24 (103 aa).

Belongs to the universal ribosomal protein uL24 family. As to quaternary structure, part of the 50S ribosomal subunit.

Functionally, one of two assembly initiator proteins, it binds directly to the 5'-end of the 23S rRNA, where it nucleates assembly of the 50S subunit. One of the proteins that surrounds the polypeptide exit tunnel on the outside of the subunit. The protein is Large ribosomal subunit protein uL24 of Latilactobacillus sakei subsp. sakei (strain 23K) (Lactobacillus sakei subsp. sakei).